Consider the following 332-residue polypeptide: 4-hydroxy-3-methylbut-2-enyl diphosphate reductase (332 aa).

Cys-34 lines the [4Fe-4S] cluster pocket. (2E)-4-hydroxy-3-methylbut-2-enyl diphosphate-binding residues include His-63 and His-96. Dimethylallyl diphosphate contacts are provided by His-63 and His-96. The isopentenyl diphosphate site is built by His-63 and His-96. Cys-118 is a [4Fe-4S] cluster binding site. His-146 is a binding site for (2E)-4-hydroxy-3-methylbut-2-enyl diphosphate. His-146 contacts dimethylallyl diphosphate. His-146 contributes to the isopentenyl diphosphate binding site. Residue Glu-148 is the Proton donor of the active site. Thr-186 contacts (2E)-4-hydroxy-3-methylbut-2-enyl diphosphate. A [4Fe-4S] cluster-binding site is contributed by Cys-216. 4 residues coordinate (2E)-4-hydroxy-3-methylbut-2-enyl diphosphate: Ser-244, Ser-245, Asn-246, and Ser-289. Dimethylallyl diphosphate is bound by residues Ser-244, Ser-245, Asn-246, and Ser-289. Isopentenyl diphosphate-binding residues include Ser-244, Ser-245, Asn-246, and Ser-289.

The protein belongs to the IspH family. Requires [4Fe-4S] cluster as cofactor.

It carries out the reaction isopentenyl diphosphate + 2 oxidized [2Fe-2S]-[ferredoxin] + H2O = (2E)-4-hydroxy-3-methylbut-2-enyl diphosphate + 2 reduced [2Fe-2S]-[ferredoxin] + 2 H(+). The enzyme catalyses dimethylallyl diphosphate + 2 oxidized [2Fe-2S]-[ferredoxin] + H2O = (2E)-4-hydroxy-3-methylbut-2-enyl diphosphate + 2 reduced [2Fe-2S]-[ferredoxin] + 2 H(+). It participates in isoprenoid biosynthesis; dimethylallyl diphosphate biosynthesis; dimethylallyl diphosphate from (2E)-4-hydroxy-3-methylbutenyl diphosphate: step 1/1. The protein operates within isoprenoid biosynthesis; isopentenyl diphosphate biosynthesis via DXP pathway; isopentenyl diphosphate from 1-deoxy-D-xylulose 5-phosphate: step 6/6. Catalyzes the conversion of 1-hydroxy-2-methyl-2-(E)-butenyl 4-diphosphate (HMBPP) into a mixture of isopentenyl diphosphate (IPP) and dimethylallyl diphosphate (DMAPP). Acts in the terminal step of the DOXP/MEP pathway for isoprenoid precursor biosynthesis. This Mycolicibacterium paratuberculosis (strain ATCC BAA-968 / K-10) (Mycobacterium paratuberculosis) protein is 4-hydroxy-3-methylbut-2-enyl diphosphate reductase.